The primary structure comprises 977 residues: Myb-like protein I (977 aa).

The tract at residues 1–122 (MMNNQSMVRY…QQQQQQLDKS (122 aa)) is disordered. Pro residues predominate over residues 21–39 (PSPPVYSPIYRSPPPPPQP). The span at 52–68 (DNSHHQVMDNSDHEQQQ) shows a compositional bias: basic and acidic residues. Residues 75–118 (QQQQQQQHHHQQQQQQQHHQQQQQQHHQQQQQHHHQQQQQQQQQ) are compositionally biased toward low complexity. Positions 167–222 (EKKKQSRYWTPEEHSRFIEALSKYGHKDVKSISQYVSTRNPTQVRTHAQKYFLRID) constitute an HTH myb-type domain. The segment at residues 195–218 (VKSISQYVSTRNPTQVRTHAQKYF) is a DNA-binding region (H-T-H motif). 5 disordered regions span residues 229–331 (LESK…SSPL), 422–516 (INNN…SSQP), 531–650 (NNNN…QQQM), 738–853 (LNSN…WPGP), and 872–960 (NYVP…GMNQ). The span at 241-252 (KDDDWLREEYND) shows a compositional bias: acidic residues. Over residues 254–275 (GSPTQYSSCSNSPTTNSVANPF) the composition is skewed to polar residues. Low complexity-rich tracts occupy residues 276 to 329 (SNSL…GNSS) and 422 to 504 (INNN…INNN). The segment covering 505 to 516 (GPNSPNLLSSQP) has biased composition (polar residues). Residues 738-754 (LNSNSGNSSPNISSING) show a composition bias toward low complexity. Positions 783–797 (LSGSPSHSPAQSPHY) are enriched in polar residues. Low complexity-rich tracts occupy residues 798 to 848 (NLNN…SHSI) and 887 to 943 (SPHF…GSGS). Positions 944 to 960 (WHQYQATDSPTGWGMNQ) are enriched in polar residues.

Its subcellular location is the nucleus. This is Myb-like protein I (mybI) from Dictyostelium discoideum (Social amoeba).